Consider the following 338-residue polypeptide: Malate dehydrogenase, mitochondrial (338 aa).

The N-terminal 24 residues, 1–24 (MLSALARPASAVLRRSFSTSAQNN), are a transit peptide targeting the mitochondrion. Residues 31 to 37 (GASGGIG) and Asp57 each bind NAD(+). Residue Ser33 is glycosylated (O-linked (GlcNAc) serine). N6-acetyllysine; alternate occurs at positions 78 and 91. An N6-succinyllysine; alternate mark is found at Lys78 and Lys91. Substrate-binding residues include Arg104 and Arg110. Residues Asn117 and 140-142 (IAN) each bind NAD(+). Asn142 is a binding site for substrate. N6-acetyllysine is present on Lys165. Residue Arg176 participates in substrate binding. Position 185 is an N6-acetyllysine; alternate (Lys185). Lys185 bears the N6-succinyllysine; alternate mark. Catalysis depends on His200, which acts as the Proton acceptor. At Lys203 the chain carries N6-succinyllysine. Lys215 and Lys239 each carry N6-acetyllysine; alternate. Lys215 and Lys239 each carry N6-succinyllysine; alternate. Lys239 carries the N6-malonyllysine; alternate modification. A Phosphoserine modification is found at Ser246. Met251 lines the NAD(+) pocket. Lys269 is subject to N6-succinyllysine. 5 positions are modified to N6-acetyllysine; alternate: Lys296, Lys301, Lys307, Lys314, and Lys324. Lys296, Lys301, Lys307, Lys314, and Lys324 each carry N6-succinyllysine; alternate. Lys307 is modified (N6-malonyllysine; alternate). Position 326 is a phosphoserine (Ser326). Lys328, Lys329, and Lys335 each carry N6-acetyllysine; alternate. The residue at position 328 (Lys328) is an N6-succinyllysine; alternate. Lys329 is modified (N6-malonyllysine; alternate). Lys335 bears the N6-succinyllysine; alternate mark.

This sequence belongs to the LDH/MDH superfamily. MDH type 1 family. As to quaternary structure, homodimer. Acetylation is enhanced after treatment either with trichostin A (TCA) or with nicotinamide (NAM) with the appearance of tri- and tetraacetylations. Glucose also increases acetylation.

It is found in the mitochondrion matrix. The enzyme catalyses (S)-malate + NAD(+) = oxaloacetate + NADH + H(+). With respect to regulation, enzyme activity is enhanced by acetylation. The protein is Malate dehydrogenase, mitochondrial (MDH2) of Pongo abelii (Sumatran orangutan).